We begin with the raw amino-acid sequence, 182 residues long: Ribosome maturation factor RimP (182 aa).

Belongs to the RimP family.

It is found in the cytoplasm. Functionally, required for maturation of 30S ribosomal subunits. The chain is Ribosome maturation factor RimP from Corynebacterium efficiens (strain DSM 44549 / YS-314 / AJ 12310 / JCM 11189 / NBRC 100395).